The chain runs to 252 residues: 5'-nucleotidase SurE (252 aa).

Positions 8, 9, 39, and 91 each coordinate a divalent metal cation.

The protein belongs to the SurE nucleotidase family. A divalent metal cation serves as cofactor.

The protein resides in the cytoplasm. The enzyme catalyses a ribonucleoside 5'-phosphate + H2O = a ribonucleoside + phosphate. In terms of biological role, nucleotidase that shows phosphatase activity on nucleoside 5'-monophosphates. This Paraburkholderia xenovorans (strain LB400) protein is 5'-nucleotidase SurE.